The sequence spans 266 residues: Gasdermin bGSDM (266 aa).

Transmembrane regions (beta stranded) follow at residues 67-83 (LQQN…GVDI), 95-113 (KLRG…ISYQ), 162-179 (SFSV…DLEA), and 187-203 (ADVN…LMEY).

Belongs to the bacterial gasdermin family. As to quaternary structure, monomer. In terms of assembly, forms large, homooligomeric ring-shaped pores when inserted in membranes.

It is found in the cytoplasm. It localises to the cell inner membrane. With respect to regulation, the full-length protein before cleavage is inactive: intramolecular interactions between the N-terminal domain and the C-terminal region mediate autoinhibition. The pyroptosis-like-inducing activity is carried by the released N-terminal domain (Gasdermin bGSDM, N-terminus). Precursor of a pore-forming protein involved in defense against bacteriophages. Expression of bGSDM and the neighboring protease gene (Gilli_2517) is not toxic in E.coli. Cleavage of this precursor by its dedicated protease releases the active moiety (gasdermin bGSDM, N-terminus) which inserts into membranes, forming pores and triggering cell death. In terms of biological role, pore-forming protein that causes membrane permeabilization via a pyroptosis-like activity. Makes ring-like pores when released. The protein is Gasdermin bGSDM of Gillisia limnaea (strain DSM 15749 / LMG 21470 / R-8282).